Reading from the N-terminus, the 724-residue chain is Pesticidal crystal protein Cry11Ba (724 aa).

Belongs to the delta endotoxin family.

Functionally, promotes colloidosmotic lysis by binding to the midgut epithelial cells of mosquitos. Active on Aedes aegypti, Culex pipiens and Anopheles stephensi larvae. In Bacillus thuringiensis subsp. jegathesan, this protein is Pesticidal crystal protein Cry11Ba (cry11Ba).